A 530-amino-acid chain; its full sequence is Meiosis 1 arrest protein (530 aa).

The disordered stretch occupies residues 463-530 (LHPHWESRAP…SEWEKDPSRP (68 aa)). The segment covering 503 to 516 (ASKMPAASKSSSDA) has biased composition (low complexity).

Its subcellular location is the cytoplasm. Functionally, required for meiosis I progression during spermatogenesis. The polypeptide is Meiosis 1 arrest protein (M1AP) (Homo sapiens (Human)).